Consider the following 267-residue polypeptide: Hydroxyethylthiazole kinase (267 aa).

Methionine 44 provides a ligand contact to substrate. Positions 120 and 165 each coordinate ATP. Glycine 192 contributes to the substrate binding site.

It belongs to the Thz kinase family. The cofactor is Mg(2+).

The enzyme catalyses 5-(2-hydroxyethyl)-4-methylthiazole + ATP = 4-methyl-5-(2-phosphooxyethyl)-thiazole + ADP + H(+). The protein operates within cofactor biosynthesis; thiamine diphosphate biosynthesis; 4-methyl-5-(2-phosphoethyl)-thiazole from 5-(2-hydroxyethyl)-4-methylthiazole: step 1/1. In terms of biological role, catalyzes the phosphorylation of the hydroxyl group of 4-methyl-5-beta-hydroxyethylthiazole (THZ). The chain is Hydroxyethylthiazole kinase from Carboxydothermus hydrogenoformans (strain ATCC BAA-161 / DSM 6008 / Z-2901).